A 332-amino-acid chain; its full sequence is Twinfilin-1 (332 aa).

In terms of domain architecture, ADF-H 1 spans 5-132 (SGIVAEQALL…VDLKNFDSAR (128 aa)). Residues serine 167 and serine 172 each carry the phosphoserine modification. Positions 173-300 (PLSLTFRVNS…DKSLLMATNK (128 aa)) constitute an ADF-H 2 domain. Positions 301 to 332 (EDSLDHGSNPDLPNKSNLKFNKPKGPLRKRRT) are disordered. A compositionally biased stretch (basic residues) spans 321-332 (NKPKGPLRKRRT).

Belongs to the actin-binding proteins ADF family. Twinfilin subfamily. Interacts with G-actin; ADP-actin form.

Its subcellular location is the cytoplasm. The protein localises to the cytoskeleton. Actin-binding protein involved in motile and morphological processes. Inhibits actin polymerization, likely by sequestering G-actin. Prevents actin filament assembly by forming a 1:1 complex with actin monomers, and inhibits the nucleotide exchange reaction of actin monomers. This Saccharomyces cerevisiae (strain ATCC 204508 / S288c) (Baker's yeast) protein is Twinfilin-1 (TWF1).